The following is a 674-amino-acid chain: MSDIEDNDGDEYDELSELRQRHKPESQPSVDEAFDLDDLLPTIGEFGKYQKLLVFGICLPACIPCGFCAFNQLFMADTPDDYWCRIPELLDLPLEQRKSLSIPKELDNDELVYSKCYTYGVNWTQLLESGEEDDLTTMEPNASWPLIKCPQGWEYNTSVVWSSIVIDFDLVCDQDIYPTIGLAALNTGGPVGVYLFGLLNDRGGRRLSYFVCLATLLAGSLMTSLSKDFWTWAGSRVIVGLTIPAVYQIPFIISLELVGENYRSFVTVMTCTFYTSGIMLLSGVTYLERDWVRLSYITSLPFYAYFLYMFVMPESPRWLLMRGRLEEALKILERMAKVNGREFPEAVHLKLEAQIRRDKLKKQKKKMANVGLADLCRTPNMRLKTILITLSWFANETVYLGLSYYGPALGTNQYVSFFLSAVVELPSYLCCWYFMDTWGRRWPLSLSMILGGVACVITVMLPDDAVDETLVLYLVSKALLSASFLIIYPFAGELYPTQVRGIGIGASSYIGGLGLIGIPFITYLGKDNLKLPLVIMGFLSMLGGMTGLRLPETLHHRLPQTIEEGEEFGKNWQFKDCCRCAQKPEILSQPASYENLDVLAGSSTNASEVELELRDSRRVREPAPRIDERTPLDTTASGSGRPVHRPSMKRLVRQMSVMDTQRTHDGTMQLTHWI.

The Cytoplasmic segment spans residues 1–53 (MSDIEDNDGDEYDELSELRQRHKPESQPSVDEAFDLDDLLPTIGEFGKYQKLL). The helical transmembrane segment at 54–74 (VFGICLPACIPCGFCAFNQLF) threads the bilayer. Topologically, residues 75 to 178 (MADTPDDYWC…DLVCDQDIYP (104 aa)) are extracellular. N-linked (GlcNAc...) asparagine glycosylation is found at asparagine 122, asparagine 141, and asparagine 156. The chain crosses the membrane as a helical span at residues 179 to 199 (TIGLAALNTGGPVGVYLFGLL). At 200 to 206 (NDRGGRR) the chain is on the cytoplasmic side. A helical membrane pass occupies residues 207–227 (LSYFVCLATLLAGSLMTSLSK). Topologically, residues 228 to 236 (DFWTWAGSR) are extracellular. Residues 237-257 (VIVGLTIPAVYQIPFIISLEL) traverse the membrane as a helical segment. Over 258-264 (VGENYRS) the chain is Cytoplasmic. A helical transmembrane segment spans residues 265–285 (FVTVMTCTFYTSGIMLLSGVT). At 286 to 293 (YLERDWVR) the chain is on the extracellular side. The helical transmembrane segment at 294 to 314 (LSYITSLPFYAYFLYMFVMPE) threads the bilayer. Topologically, residues 315 to 385 (SPRWLLMRGR…CRTPNMRLKT (71 aa)) are cytoplasmic. A helical transmembrane segment spans residues 386–406 (ILITLSWFANETVYLGLSYYG). Residues 407–414 (PALGTNQY) are Extracellular-facing. A helical transmembrane segment spans residues 415-435 (VSFFLSAVVELPSYLCCWYFM). Topologically, residues 436–441 (DTWGRR) are cytoplasmic. The helical transmembrane segment at 442 to 462 (WPLSLSMILGGVACVITVMLP) threads the bilayer. At 463–469 (DDAVDET) the chain is on the extracellular side. Residues 470–490 (LVLYLVSKALLSASFLIIYPF) form a helical membrane-spanning segment. Residues 491-500 (AGELYPTQVR) lie on the Cytoplasmic side of the membrane. A helical transmembrane segment spans residues 501 to 521 (GIGIGASSYIGGLGLIGIPFI). Topologically, residues 522-527 (TYLGKD) are extracellular. The helical transmembrane segment at 528–548 (NLKLPLVIMGFLSMLGGMTGL) threads the bilayer. Residues 549-674 (RLPETLHHRL…DGTMQLTHWI (126 aa)) are Cytoplasmic-facing. Positions 614–631 (RDSRRVREPAPRIDERTP) are enriched in basic and acidic residues. A disordered region spans residues 614 to 647 (RDSRRVREPAPRIDERTPLDTTASGSGRPVHRPS).

The protein belongs to the major facilitator (TC 2.A.1) superfamily. Organic cation transporter (TC 2.A.1.19) family. As to expression, expressed in photoreceptor cells.

The protein localises to the cell membrane. Its subcellular location is the cell projection. The protein resides in the axon. In terms of biological role, carcinine transporter which is required for recycling of the neurotransmitter histamine in photoreceptor neurons of the compound eye. Following histamine release from photoreceptors and its uptake by glia where it is converted to carcinine, required for the uptake of carcinine from glia into photoreceptor cells where it can be hydrolyzed by tan to form histamine and beta-alanine. In Drosophila melanogaster (Fruit fly), this protein is Carcinine transporter.